A 491-amino-acid polypeptide reads, in one-letter code: Synaptotagmin-9 (491 aa).

Over 1–52 the chain is Vesicular; the sequence is MPGARDALCHQALQLLAELCARGALEHDSCQDFIYHLRDRARPRLRDPDISV. The cysteine motif stretch occupies residues 9–31; it reads CHQALQLLAELCARGALEHDSCQ. A helical membrane pass occupies residues 53–73; that stretch reads SLLTLVVTACGLALFGVSLFV. Topologically, residues 74–491 are cytoplasmic; the sequence is SWKLCWVPWR…AHWHSLVEKR (418 aa). Serine 177 is modified (phosphoserine). C2 domains are found at residues 220–341 and 352–485; these read ACGK…ILWK and DLGE…AHWH. Aspartate 251, aspartate 257, aspartate 309, phenylalanine 310, aspartate 311, serine 314, aspartate 317, aspartate 383, aspartate 389, aspartate 443, and aspartate 445 together coordinate Ca(2+).

This sequence belongs to the synaptotagmin family. In terms of assembly, homodimer; disulfide-linked via the cysteine motif. Can also form heterodimers with SYT3, SYT6, SYT7 and SYT10. The cofactor is Ca(2+).

The protein localises to the cytoplasmic vesicle. It localises to the secretory vesicle. Its subcellular location is the synaptic vesicle membrane. In terms of biological role, may be involved in Ca(2+)-dependent exocytosis of secretory vesicles through Ca(2+) and phospholipid binding to the C2 domain or may serve as Ca(2+) sensors in the process of vesicular trafficking and exocytosis. The chain is Synaptotagmin-9 (SYT9) from Homo sapiens (Human).